The following is an 892-amino-acid chain: DNA mismatch repair protein MutS (892 aa).

Residues 663 to 684 (TNTSLREAAPTTTLSTSDQGQM) form a disordered region. 696–703 (GPNASGKS) contributes to the ATP binding site.

The protein belongs to the DNA mismatch repair MutS family.

This protein is involved in the repair of mismatches in DNA. It is possible that it carries out the mismatch recognition step. This protein has a weak ATPase activity. In Nostoc punctiforme (strain ATCC 29133 / PCC 73102), this protein is DNA mismatch repair protein MutS.